We begin with the raw amino-acid sequence, 365 residues long: Peptide chain release factor 2 (365 aa).

N5-methylglutamine is present on Q252.

This sequence belongs to the prokaryotic/mitochondrial release factor family. Post-translationally, methylated by PrmC. Methylation increases the termination efficiency of RF2.

The protein resides in the cytoplasm. Peptide chain release factor 2 directs the termination of translation in response to the peptide chain termination codons UGA and UAA. This Pasteurella multocida (strain Pm70) protein is Peptide chain release factor 2.